The following is a 142-amino-acid chain: Large ribosomal subunit protein uL13 (142 aa).

It belongs to the universal ribosomal protein uL13 family. Part of the 50S ribosomal subunit.

Functionally, this protein is one of the early assembly proteins of the 50S ribosomal subunit, although it is not seen to bind rRNA by itself. It is important during the early stages of 50S assembly. This is Large ribosomal subunit protein uL13 from Aliivibrio fischeri (strain ATCC 700601 / ES114) (Vibrio fischeri).